The primary structure comprises 1021 residues: Ankyrin repeat- and BTB/POZ domain-containing protein 3-A (1021 aa).

Residues 160–180 (MVLSWTISVNCITAALSALSL) traverse the membrane as a helical segment. ANK repeat units follow at residues 515–544 (QGMT…DINS), 561–590 (RQGT…NVEG), 599–628 (YTET…DPLI), and 642–671 (GEMN…KDKG). The BTB domain maps to 836–902 (SDVTFLVEGK…LYCGGTESLH (67 aa)).

The protein localises to the membrane. This chain is Ankyrin repeat- and BTB/POZ domain-containing protein 3-A (abtb3a), found in Danio rerio (Zebrafish).